The sequence spans 269 residues: Regulatory protein RecX (269 aa).

It belongs to the RecX family.

It localises to the cytoplasm. In terms of biological role, modulates RecA activity. The chain is Regulatory protein RecX from Lactococcus lactis subsp. cremoris (strain MG1363).